The primary structure comprises 364 residues: Long-wave-sensitive opsin 1 (364 aa).

Residues 1 to 52 (MAQRWGPQKLAGGQPQAGFEDSTQASIFTYTNNNATRDPFEGPNYHIAPRWV) lie on the Extracellular side of the membrane. Ser-22 carries an O-linked (GlcNAc) serine glycan. A glycan (N-linked (GlcNAc...) asparagine) is linked at Asn-34. The helical transmembrane segment at 53–77 (YHVTSAWMIFVVIASVFTNGLVLAA) threads the bilayer. Residues 78-89 (TMRFKKLRHPLN) lie on the Cytoplasmic side of the membrane. A helical transmembrane segment spans residues 90 to 115 (WILVNLAVADLAETIIASTISVVNQI). At 116–129 (YGYFVLGHPMCVVE) the chain is on the extracellular side. A disulfide bridge connects residues Cys-126 and Cys-203. Residues 130-149 (GYTVSLCGITGLWSLAIISW) form a helical membrane-spanning segment. The Cytoplasmic portion of the chain corresponds to 150-168 (ERWMVVCKPFGNVRFDAKL). The chain crosses the membrane as a helical span at residues 169-192 (AVAGIAFSWIWAAVWTAPPIFGWS). The Extracellular segment spans residues 193–218 (RYWPHGLKTSCGPDVFSGSSYPGVQS). Residues 219 to 246 (YMIVLMITCCIIPLSVIVLCYLQVWLAI) traverse the membrane as a helical segment. Residues 247–268 (RAVAKQQKESESTQKAEKEVTR) are Cytoplasmic-facing. The chain crosses the membrane as a helical span at residues 269–292 (MVMVMVFAFCLCWGPYTFFACFAA). The Extracellular segment spans residues 293–300 (AHPGYAFH). Residues 301–325 (PLVAALPAYFAKSATIYNPIIYVFM) traverse the membrane as a helical segment. Residue Lys-312 is modified to N6-(retinylidene)lysine. The Cytoplasmic segment spans residues 326–364 (NRQFRNCILQLFGKKVDDSSELSSVSKTEASSVSSVSPA).

It belongs to the G-protein coupled receptor 1 family. Opsin subfamily. Phosphorylated on some or all of the serine and threonine residues present in the C-terminal region. The three color pigments are found in the cone photoreceptor cells. Expressed in retina.

The protein localises to the membrane. Functionally, visual pigments are the light-absorbing molecules that mediate vision. They consist of an apoprotein, opsin, covalently linked to cis-retinal. The protein is Long-wave-sensitive opsin 1 (OPN1LW) of Equus caballus (Horse).